A 606-amino-acid chain; its full sequence is MSDQNLDIQQDHQKYVESLGDWARTNTCGELNANAIGSEVCLMGWVQFRRDHGGLIFIDLRDRSGLTQVVFSPDVSVDAHERAHVLRSEYVLAVRGTVRPRPEGMVNPNMKTGEVEVYVSEWKLLNTSKTPPFQVEDRVEASENLRLEYRYLDLRRPRLARNFQLRHRATQAIRNYLDQLNFLEVETPYLTKSTPEGARDFLVPSRMNQGEFYALPQSPQIFKQLLMVAGMDRYYQIVRCFRDEDLRADRQPEFTQVDIEMSFVDEERVQSMAEGLMARVFKETLGIDVALPFPRMPYDQAIAEYGLDKPDTRFDLRLKDVTDILRGSGFRLFAKAELVKAMRVPGGAVLSRKEIDDFTEFVKVYGAQGLAWIKIKEDEWQSPIAKFLSDDERAALTTELGLETGDIVFFQAASPDVVNNSLGYLRLKVADRFGLIPENSYNFLWVTDFPLFEYSPEDKRYVACHHPFTAPQVGHEELMVSDPAKARARAYDLVLNGNEVGGGSIRIHSREAQEHMFRALGFDPQEAEEQFGFLMQALELGAPPHGGIAFGMDRLVMLLAGSASIRDVIAFPKTQKATCLMTHAPDQVAAKQLRELGIRLREKQEA.

E196 contacts L-aspartate. An aspartate region spans residues 220–223 (QIFK). R242 is an L-aspartate binding site. ATP is bound by residues 242 to 244 (RDE) and Q251. Residue H465 coordinates L-aspartate. E499 is an ATP binding site. Residue R506 coordinates L-aspartate. 551 to 554 (GMDR) serves as a coordination point for ATP.

This sequence belongs to the class-II aminoacyl-tRNA synthetase family. Type 1 subfamily. In terms of assembly, homodimer.

Its subcellular location is the cytoplasm. It carries out the reaction tRNA(Asx) + L-aspartate + ATP = L-aspartyl-tRNA(Asx) + AMP + diphosphate. In terms of biological role, aspartyl-tRNA synthetase with relaxed tRNA specificity since it is able to aspartylate not only its cognate tRNA(Asp) but also tRNA(Asn). Reaction proceeds in two steps: L-aspartate is first activated by ATP to form Asp-AMP and then transferred to the acceptor end of tRNA(Asp/Asn). In Oleidesulfovibrio alaskensis (strain ATCC BAA-1058 / DSM 17464 / G20) (Desulfovibrio alaskensis), this protein is Aspartate--tRNA(Asp/Asn) ligase.